Reading from the N-terminus, the 316-residue chain is Phospho-N-acetylmuramoyl-pentapeptide-transferase (316 aa).

Helical transmembrane passes span 5 to 25 (IIFA…FFIP), 52 to 72 (TMGG…FSPW), 76 to 96 (LFIL…DDFL), 116 to 136 (FLLA…EIIV), 145 to 165 (LANF…NSVN), 172 to 192 (GLAA…ALFL), 195 to 212 (VTYG…LGFL), 221 to 241 (VFMG…VALL), 244 to 264 (LPLI…SVIL), and 296 to 316 (VVYS…YSLS).

The protein belongs to the glycosyltransferase 4 family. MraY subfamily. It depends on Mg(2+) as a cofactor.

Its subcellular location is the cell membrane. The enzyme catalyses UDP-N-acetyl-alpha-D-muramoyl-L-alanyl-gamma-D-glutamyl-meso-2,6-diaminopimeloyl-D-alanyl-D-alanine + di-trans,octa-cis-undecaprenyl phosphate = di-trans,octa-cis-undecaprenyl diphospho-N-acetyl-alpha-D-muramoyl-L-alanyl-D-glutamyl-meso-2,6-diaminopimeloyl-D-alanyl-D-alanine + UMP. It functions in the pathway cell wall biogenesis; peptidoglycan biosynthesis. Functionally, catalyzes the initial step of the lipid cycle reactions in the biosynthesis of the cell wall peptidoglycan: transfers peptidoglycan precursor phospho-MurNAc-pentapeptide from UDP-MurNAc-pentapeptide onto the lipid carrier undecaprenyl phosphate, yielding undecaprenyl-pyrophosphoryl-MurNAc-pentapeptide, known as lipid I. The chain is Phospho-N-acetylmuramoyl-pentapeptide-transferase from Caldanaerobacter subterraneus subsp. tengcongensis (strain DSM 15242 / JCM 11007 / NBRC 100824 / MB4) (Thermoanaerobacter tengcongensis).